A 306-amino-acid chain; its full sequence is Cell division protein ZipA (306 aa).

Residues 1–6 (MENLQL) lie on the Periplasmic side of the membrane. The chain crosses the membrane as a helical span at residues 7-27 (VLLLIGAIAIIAVLVHGFWSI). The Cytoplasmic portion of the chain corresponds to 28-306 (RKQQPKGYKQ…NYIQRIRAQA (279 aa)).

The protein belongs to the ZipA family. As to quaternary structure, interacts with FtsZ via their C-terminal domains.

It is found in the cell inner membrane. In terms of biological role, essential cell division protein that stabilizes the FtsZ protofilaments by cross-linking them and that serves as a cytoplasmic membrane anchor for the Z ring. Also required for the recruitment to the septal ring of downstream cell division proteins. The polypeptide is Cell division protein ZipA (Shewanella halifaxensis (strain HAW-EB4)).